The chain runs to 526 residues: Bifunctional purine biosynthesis protein PurH (526 aa).

The 145-residue stretch at 1 to 145 (MSKAPLALLS…KNHAHVGIVT (145 aa)) folds into the MGS-like domain.

The protein belongs to the PurH family.

The enzyme catalyses (6R)-10-formyltetrahydrofolate + 5-amino-1-(5-phospho-beta-D-ribosyl)imidazole-4-carboxamide = 5-formamido-1-(5-phospho-D-ribosyl)imidazole-4-carboxamide + (6S)-5,6,7,8-tetrahydrofolate. It catalyses the reaction IMP + H2O = 5-formamido-1-(5-phospho-D-ribosyl)imidazole-4-carboxamide. It participates in purine metabolism; IMP biosynthesis via de novo pathway; 5-formamido-1-(5-phospho-D-ribosyl)imidazole-4-carboxamide from 5-amino-1-(5-phospho-D-ribosyl)imidazole-4-carboxamide (10-formyl THF route): step 1/1. The protein operates within purine metabolism; IMP biosynthesis via de novo pathway; IMP from 5-formamido-1-(5-phospho-D-ribosyl)imidazole-4-carboxamide: step 1/1. The chain is Bifunctional purine biosynthesis protein PurH from Psychrobacter cryohalolentis (strain ATCC BAA-1226 / DSM 17306 / VKM B-2378 / K5).